The sequence spans 236 residues: Leucyl/phenylalanyl-tRNA--protein transferase (236 aa).

This sequence belongs to the L/F-transferase family.

The protein localises to the cytoplasm. It catalyses the reaction N-terminal L-lysyl-[protein] + L-leucyl-tRNA(Leu) = N-terminal L-leucyl-L-lysyl-[protein] + tRNA(Leu) + H(+). The enzyme catalyses N-terminal L-arginyl-[protein] + L-leucyl-tRNA(Leu) = N-terminal L-leucyl-L-arginyl-[protein] + tRNA(Leu) + H(+). It carries out the reaction L-phenylalanyl-tRNA(Phe) + an N-terminal L-alpha-aminoacyl-[protein] = an N-terminal L-phenylalanyl-L-alpha-aminoacyl-[protein] + tRNA(Phe). Its function is as follows. Functions in the N-end rule pathway of protein degradation where it conjugates Leu, Phe and, less efficiently, Met from aminoacyl-tRNAs to the N-termini of proteins containing an N-terminal arginine or lysine. The chain is Leucyl/phenylalanyl-tRNA--protein transferase from Nitrosomonas europaea (strain ATCC 19718 / CIP 103999 / KCTC 2705 / NBRC 14298).